The primary structure comprises 124 residues: Small ribosomal subunit protein uS12c (124 aa).

Belongs to the universal ribosomal protein uS12 family. Part of the 30S ribosomal subunit.

It is found in the plastid. The protein resides in the chloroplast. In terms of biological role, with S4 and S5 plays an important role in translational accuracy. Located at the interface of the 30S and 50S subunits. The polypeptide is Small ribosomal subunit protein uS12c (rps12) (Ostreococcus tauri).